A 146-amino-acid polypeptide reads, in one-letter code: MTNSKKSSNNSSKSSELYAIAETSGQQFWFEVDRYYDIDRLNAKEKDKITLEKVLLLKDKDSISVGKPYVKDAKIELEVVSHKRDKKILVYKMRPKKKTRRKMGHRQELTRVMVKSITIGKSAPKSSSKKETVKKETKPKSEKSTN.

A disordered region spans residues 117–146; that stretch reads ITIGKSAPKSSSKKETVKKETKPKSEKSTN. Residues 128 to 146 show a composition bias toward basic and acidic residues; sequence SKKETVKKETKPKSEKSTN.

It belongs to the bacterial ribosomal protein bL21 family. Part of the 50S ribosomal subunit. Contacts protein L20.

Functionally, this protein binds to 23S rRNA in the presence of protein L20. This is Large ribosomal subunit protein bL21 from Prochlorococcus marinus (strain MIT 9301).